Consider the following 124-residue polypeptide: ATP synthase epsilon chain (124 aa).

The protein belongs to the ATPase epsilon chain family. F-type ATPases have 2 components, CF(1) - the catalytic core - and CF(0) - the membrane proton channel. CF(1) has five subunits: alpha(3), beta(3), gamma(1), delta(1), epsilon(1). CF(0) has three main subunits: a, b and c.

The protein resides in the cell membrane. Its function is as follows. Produces ATP from ADP in the presence of a proton gradient across the membrane. The sequence is that of ATP synthase epsilon chain from Corynebacterium efficiens (strain DSM 44549 / YS-314 / AJ 12310 / JCM 11189 / NBRC 100395).